A 122-amino-acid chain; its full sequence is MIQMQTNLDVADNSGARRVMCIKVLGGSKRRYATVGDIIVVSIKEAIPRGKVKKGDVMKAVVVRVSKDIRRADGSVIRFDRNAAVLINNQSEPVGTRIFGPVPRELRAKNHMKIISLAPEVL.

The protein belongs to the universal ribosomal protein uL14 family. As to quaternary structure, part of the 50S ribosomal subunit. Forms a cluster with proteins L3 and L19. In the 70S ribosome, L14 and L19 interact and together make contacts with the 16S rRNA in bridges B5 and B8.

Its function is as follows. Binds to 23S rRNA. Forms part of two intersubunit bridges in the 70S ribosome. The chain is Large ribosomal subunit protein uL14 from Nitrobacter winogradskyi (strain ATCC 25391 / DSM 10237 / CIP 104748 / NCIMB 11846 / Nb-255).